Reading from the N-terminus, the 417-residue chain is Serine hydroxymethyltransferase 1 (417 aa).

Residues leucine 121 and 125 to 127 (GHL) each bind (6S)-5,6,7,8-tetrahydrofolate. Lysine 229 carries the N6-(pyridoxal phosphate)lysine modification. 354–356 (SPF) lines the (6S)-5,6,7,8-tetrahydrofolate pocket.

The protein belongs to the SHMT family. Homodimer. The cofactor is pyridoxal 5'-phosphate.

It is found in the cytoplasm. The catalysed reaction is (6R)-5,10-methylene-5,6,7,8-tetrahydrofolate + glycine + H2O = (6S)-5,6,7,8-tetrahydrofolate + L-serine. The protein operates within one-carbon metabolism; tetrahydrofolate interconversion. Its pathway is amino-acid biosynthesis; glycine biosynthesis; glycine from L-serine: step 1/1. Catalyzes the reversible interconversion of serine and glycine with tetrahydrofolate (THF) serving as the one-carbon carrier. This reaction serves as the major source of one-carbon groups required for the biosynthesis of purines, thymidylate, methionine, and other important biomolecules. Also exhibits THF-independent aldolase activity toward beta-hydroxyamino acids, producing glycine and aldehydes, via a retro-aldol mechanism. This is Serine hydroxymethyltransferase 1 from Pseudomonas savastanoi pv. phaseolicola (strain 1448A / Race 6) (Pseudomonas syringae pv. phaseolicola (strain 1448A / Race 6)).